The sequence spans 348 residues: MKLDDRKQKVLLAIVHDYIATAEPVGSRTIAKKYKLGVSPATIRNEMADLEEMGYIEQPHTSAGRIPSERGYRYYVDYLMKRQELSREEEELIRREYEAKVRDVGQVIQKTGQLLSQLTNYTAVVLSPQIESSRFKYIQLVSMHPSQAMVIVVMDNGIVHNRMIEVPESITCADMETISRVLNAKLRGLTMESIRLTLMKEIYFELARHKHILDLAMELIQDSLLHKVEDKIYLGGVFNMLNQPEFHDVEKVKTLLGILEQEKLLRDLITSGGSEEGVTVRIGGEIMHEDIRECSMVTAPYSVCGRKIGSLGVLGPTRMEYAKVVSVVDFMTKNLSQVLERIVRGTGR.

The protein belongs to the HrcA family.

In terms of biological role, negative regulator of class I heat shock genes (grpE-dnaK-dnaJ and groELS operons). Prevents heat-shock induction of these operons. The protein is Heat-inducible transcription repressor HrcA of Pelotomaculum thermopropionicum (strain DSM 13744 / JCM 10971 / SI).